The following is a 716-amino-acid chain: DEAD-box ATP-dependent RNA helicase 31 (716 aa).

Residues 99–188 (GILKSDDEDE…LRLEDESSDE (90 aa)) form a disordered region. Over residues 110–121 (DRSRGRNQEKRG) the composition is skewed to basic and acidic residues. Residues 144–153 (SRIQGKSSEA) show a composition bias toward polar residues. Residues 155–188 (FRGRKETSFSRDREDEKGLRKREDLRLEDESSDE) show a composition bias toward basic and acidic residues. Positions 248 to 276 (TRFDHYPLSPLSLKAIKDAGYETMTVVQE) match the Q motif motif. Residues 279-462 (LPIILKGKDV…LVALRRDHEF (184 aa)) enclose the Helicase ATP-binding domain. 292–299 (AKTGTGKT) is a binding site for ATP. Residues 410–413 (DEAD) carry the DEAD box motif. Residues 497–643 (LREHIMGNVD…IDPETVKKVQ (147 aa)) form the Helicase C-terminal domain.

This sequence belongs to the DEAD box helicase family.

It carries out the reaction ATP + H2O = ADP + phosphate + H(+). The sequence is that of DEAD-box ATP-dependent RNA helicase 31 (RH31) from Arabidopsis thaliana (Mouse-ear cress).